The following is a 396-amino-acid chain: Purine ribonucleoside efflux pump NepI (396 aa).

Residues 1–21 (MSEFIAENRGADAITRPNWSA) are Cytoplasmic-facing. Residues 22–42 (VFSVAFCVACLIIVEFLPVSL) traverse the membrane as a helical segment. Topologically, residues 43-54 (LTPMAQDLGISE) are periplasmic. A helical transmembrane segment spans residues 55-75 (GVAGQSVTVTAFVAMFASLFI). At 76–85 (TQTIQATDRR) the chain is on the cytoplasmic side. The helical transmembrane segment at 86–106 (YVVILFAVLLTLSCLLVSFAN) threads the bilayer. A topological domain (periplasmic) is located at residue serine 107. A helical transmembrane segment spans residues 108–128 (FSLLLIGRACLGLALGGFWAI). Over 129-147 (SASLTMRLVPPRTVPKALS) the chain is Cytoplasmic. The chain crosses the membrane as a helical span at residues 148-168 (VIFGAVSIALVIAAPLGGFLG). Over 169–175 (ELIGWRN) the chain is Periplasmic. A helical transmembrane segment spans residues 176-196 (VFNAAAAMGVLCIFWIIKSLP). The Cytoplasmic portion of the chain corresponds to 197–215 (SLPGEPSHQKQNTFRLLQR). Residues 216–236 (PGVMAGMIAIFMSFAGQFAFF) traverse the membrane as a helical segment. Residues 237–255 (TYIRPVYMNLAGFGVDGLT) lie on the Periplasmic side of the membrane. Residues 256–276 (LVLLSFGIASFVGTSLSSFIL) form a helical membrane-spanning segment. At 277-281 (KRSVK) the chain is on the cytoplasmic side. A helical transmembrane segment spans residues 282-302 (LALAGAPFVLALSALVLTLWG). Topologically, residues 303 to 305 (SDK) are periplasmic. The helical transmembrane segment at 306 to 326 (IVATGVAIIWGLTFALIPVGW) threads the bilayer. At 327 to 343 (STWITRSLADQAEKAGS) the chain is on the cytoplasmic side. Residues 344 to 364 (IQVAVIQLANTCGAAIGGYAL) traverse the membrane as a helical segment. The Periplasmic segment spans residues 365-366 (DN). A helical membrane pass occupies residues 367-387 (IGLTSPLMLSGTLMLLTALLV). Over 388 to 396 (TAKVKMKKS) the chain is Cytoplasmic.

The protein belongs to the major facilitator superfamily. DHA1 family. NepI (TC 2.A.1.2.26) subfamily.

Its subcellular location is the cell inner membrane. It carries out the reaction inosine(in) + H(+)(out) = inosine(out) + H(+)(in). It catalyses the reaction guanosine(in) + H(+)(out) = guanosine(out) + H(+)(in). Involved in the efflux of purine ribonucleosides, such as inosine and guanosine. The protein is Purine ribonucleoside efflux pump NepI of Escherichia coli O127:H6 (strain E2348/69 / EPEC).